Consider the following 442-residue polypeptide: Putative pyrimidine permease RutG (442 aa).

Topologically, residues 1–57 (MAMFGFPHWQLKSTSTESGVVAPDERLPFAQTAVMGVQHAVAMFGATVLMPILMGLD) are cytoplasmic. Residues 58–78 (PNLSILMSGIGTLLFFFITGG) form a helical membrane-spanning segment. Position 79 (R79) is a topological domain, periplasmic. A helical membrane pass occupies residues 80–100 (VPSYLGSSAAFVGVVIAATGF). At 101-110 (NGQGINPNIS) the chain is on the cytoplasmic side. The helical transmembrane segment at 111–131 (IALGGIIACGLVYTVIGLVVM) threads the bilayer. At 132–140 (KIGTRWIER) the chain is on the periplasmic side. Residues 141–161 (LMPPVVTGAVVMAIGLNLAPI) form a helical membrane-spanning segment. Topologically, residues 162-169 (AVKSVSAS) are cytoplasmic. The helical transmembrane segment at 170–190 (AFDSWMAVMTVLCIGLVAVFT) threads the bilayer. Over 191–196 (RGMIQR) the chain is Periplasmic. A helical transmembrane segment spans residues 197-217 (LLILVGLIVACLLYGVMTNVL). Topologically, residues 218–240 (GLGKAVDFTLVSHAAWFGLPHFS) are cytoplasmic. Residues 241–261 (TPAFNGQAMMLIAPVAVILVA) traverse the membrane as a helical segment. Residues 262–284 (ENLGHLKAVAGMTGRNMDPYMGR) are Periplasmic-facing. A helical transmembrane segment spans residues 285 to 305 (AFVGDGLATMLSGSVGGSGVT). The Cytoplasmic portion of the chain corresponds to 306–318 (TYAENIGVMAVTK). The chain crosses the membrane as a helical span at residues 319 to 339 (VYSTLVFVAAAVIAMLLGFSP). Residues 340 to 347 (KFGALIHT) are Periplasmic-facing. A helical membrane pass occupies residues 348-368 (IPAAVIGGASIVVFGLIAVAG). At 369–385 (ARIWVQNRVDLSQNGNL) the chain is on the cytoplasmic side. The next 2 membrane-spanning stretches (helical) occupy residues 386 to 406 (IMVA…LGGF) and 407 to 427 (TLGG…LLSR). Over 428–442 (KLVDVPPPEVVHQEP) the chain is Cytoplasmic.

Belongs to the nucleobase:cation symporter-2 (NCS2) (TC 2.A.40) family.

It localises to the cell inner membrane. In terms of biological role, may function as a proton-driven pyrimidine uptake system. This is Putative pyrimidine permease RutG (rutG) from Escherichia coli (strain K12).